A 161-amino-acid chain; its full sequence is Nucleotide-binding protein Lferr_1091 (161 aa).

The protein belongs to the YajQ family.

Nucleotide-binding protein. The protein is Nucleotide-binding protein Lferr_1091 of Acidithiobacillus ferrooxidans (strain ATCC 53993 / BNL-5-31) (Leptospirillum ferrooxidans (ATCC 53993)).